Reading from the N-terminus, the 195-residue chain is Imidazoleglycerol-phosphate dehydratase (195 aa).

The protein belongs to the imidazoleglycerol-phosphate dehydratase family.

Its subcellular location is the cytoplasm. The enzyme catalyses D-erythro-1-(imidazol-4-yl)glycerol 3-phosphate = 3-(imidazol-4-yl)-2-oxopropyl phosphate + H2O. It functions in the pathway amino-acid biosynthesis; L-histidine biosynthesis; L-histidine from 5-phospho-alpha-D-ribose 1-diphosphate: step 6/9. The polypeptide is Imidazoleglycerol-phosphate dehydratase (Hydrogenovibrio crunogenus (strain DSM 25203 / XCL-2) (Thiomicrospira crunogena)).